A 158-amino-acid polypeptide reads, in one-letter code: L-alanine exporter AlaE (158 aa).

4 helical membrane-spanning segments follow: residues 23–43 (FAMVVYCSVVGMMIEIFVSGM), 53–73 (LVAIPVNMVIAWPYGLYRDAV), 92–112 (VIAYITFQSPVYAAILLFVGA), and 117–137 (IITAVSSNIVVSMMMGAAYGY).

The protein belongs to the AlaE exporter family.

The protein resides in the cell inner membrane. Its function is as follows. Exports L-alanine. The sequence is that of L-alanine exporter AlaE from Cronobacter sakazakii (strain ATCC BAA-894) (Enterobacter sakazakii).